The chain runs to 393 residues: MTVINMTDLDLAGKRVFIRADLNVPVSDGKVTSDARITASIPTIRHALDAKARVMVTSHLGRPEEGVYSEENSLQPVADVLADKLGQPVRLIKDWVDGGFEVAEGEVVLLENCRFNKGEKKNAEETARKYAALCDVFVMDAFGTAHRAEASTYGVAQYAPVAAAGLLLVGELDALGKALCEPARPMVAIVGGSKVSTKLTVLESLAEKVDQLVVGGGIANTFLKAAGKPIGRSLSEDDLVPTAQCLMEKMAKRGAAVPIAVDVVCGKQFDANEPAVLKSAEDVADDDMIFDIGPESAKQLAEIILNAGTVVWNGPVGVFEFDQFGEGTKTIADAIAKTKAFTLAGGGDTIAAIQKYDIYDKVSYISTAGGAFLEFLEGKKLPAVEILEQRAKG.

Substrate is bound by residues 21–23 (DLN), Arg-36, 59–62 (HLGR), Arg-114, and Arg-147. Residues Lys-198, Glu-320, and 346 to 349 (GGDT) each bind ATP.

It belongs to the phosphoglycerate kinase family. In terms of assembly, monomer.

It is found in the cytoplasm. It catalyses the reaction (2R)-3-phosphoglycerate + ATP = (2R)-3-phospho-glyceroyl phosphate + ADP. The protein operates within carbohydrate degradation; glycolysis; pyruvate from D-glyceraldehyde 3-phosphate: step 2/5. This Methylobacillus flagellatus (strain ATCC 51484 / DSM 6875 / VKM B-1610 / KT) protein is Phosphoglycerate kinase.